Here is a 243-residue protein sequence, read N- to C-terminus: 2-C-methyl-D-erythritol 4-phosphate cytidylyltransferase (243 aa).

The protein belongs to the IspD/TarI cytidylyltransferase family. IspD subfamily. As to quaternary structure, homodimer.

It carries out the reaction 2-C-methyl-D-erythritol 4-phosphate + CTP + H(+) = 4-CDP-2-C-methyl-D-erythritol + diphosphate. The protein operates within isoprenoid biosynthesis; isopentenyl diphosphate biosynthesis via DXP pathway; isopentenyl diphosphate from 1-deoxy-D-xylulose 5-phosphate: step 2/6. Its function is as follows. Catalyzes the formation of 4-diphosphocytidyl-2-C-methyl-D-erythritol from CTP and 2-C-methyl-D-erythritol 4-phosphate (MEP). In Photorhabdus laumondii subsp. laumondii (strain DSM 15139 / CIP 105565 / TT01) (Photorhabdus luminescens subsp. laumondii), this protein is 2-C-methyl-D-erythritol 4-phosphate cytidylyltransferase.